Consider the following 757-residue polypeptide: 5-methyltetrahydropteroyltriglutamate--homocysteine methyltransferase (757 aa).

5-methyltetrahydropteroyltri-L-glutamate contacts are provided by residues 17–20 (RELK) and Lys115. L-homocysteine-binding positions include 430–432 (IGS) and Glu483. Residues 430–432 (IGS) and Glu483 each bind L-methionine. 5-methyltetrahydropteroyltri-L-glutamate is bound by residues 514–515 (RC) and Trp560. Residue Asp598 coordinates L-homocysteine. L-methionine is bound at residue Asp598. Glu604 contributes to the 5-methyltetrahydropteroyltri-L-glutamate binding site. His640, Cys642, and Glu664 together coordinate Zn(2+). His693 serves as the catalytic Proton donor. Cys725 serves as a coordination point for Zn(2+).

The protein belongs to the vitamin-B12 independent methionine synthase family. Zn(2+) serves as cofactor.

The enzyme catalyses 5-methyltetrahydropteroyltri-L-glutamate + L-homocysteine = tetrahydropteroyltri-L-glutamate + L-methionine. It functions in the pathway amino-acid biosynthesis; L-methionine biosynthesis via de novo pathway; L-methionine from L-homocysteine (MetE route): step 1/1. Its function is as follows. Catalyzes the transfer of a methyl group from 5-methyltetrahydrofolate to homocysteine resulting in methionine formation. The protein is 5-methyltetrahydropteroyltriglutamate--homocysteine methyltransferase of Buchnera aphidicola subsp. Schizaphis graminum (strain Sg).